The primary structure comprises 206 residues: Large ribosomal subunit protein uL4 (206 aa).

The segment at 44 to 80 is disordered; the sequence is KRAGTHSVKTRSTISGGGAKPWRQKGTGRARSGSNRS.

It belongs to the universal ribosomal protein uL4 family. In terms of assembly, part of the 50S ribosomal subunit.

Functionally, one of the primary rRNA binding proteins, this protein initially binds near the 5'-end of the 23S rRNA. It is important during the early stages of 50S assembly. It makes multiple contacts with different domains of the 23S rRNA in the assembled 50S subunit and ribosome. Its function is as follows. Forms part of the polypeptide exit tunnel. This Oleidesulfovibrio alaskensis (strain ATCC BAA-1058 / DSM 17464 / G20) (Desulfovibrio alaskensis) protein is Large ribosomal subunit protein uL4.